The chain runs to 119 residues: Putative transmembrane protein ORF119 (119 aa).

Helical transmembrane passes span 9–29 (TLAI…PAMV), 73–93 (QYAG…SIFT), and 95–115 (PIAL…AFYY).

Its subcellular location is the host membrane. The sequence is that of Putative transmembrane protein ORF119 from Acidianus convivator (ATV).